A 162-amino-acid polypeptide reads, in one-letter code: Cyclic pyranopterin monophosphate synthase (162 aa).

Residues 75-77 and 113-114 each bind substrate; these read LCH and ME. Asp-128 is a catalytic residue.

Belongs to the MoaC family. Homohexamer; trimer of dimers.

It carries out the reaction (8S)-3',8-cyclo-7,8-dihydroguanosine 5'-triphosphate = cyclic pyranopterin phosphate + diphosphate. Its pathway is cofactor biosynthesis; molybdopterin biosynthesis. Its function is as follows. Catalyzes the conversion of (8S)-3',8-cyclo-7,8-dihydroguanosine 5'-triphosphate to cyclic pyranopterin monophosphate (cPMP). The protein is Cyclic pyranopterin monophosphate synthase of Burkholderia ambifaria (strain ATCC BAA-244 / DSM 16087 / CCUG 44356 / LMG 19182 / AMMD) (Burkholderia cepacia (strain AMMD)).